The following is a 92-amino-acid chain: DNA-directed RNA polymerase subunit Rpo5 (92 aa).

This sequence belongs to the archaeal Rpo5/eukaryotic RPB5 RNA polymerase subunit family. In terms of assembly, part of the RNA polymerase complex.

The protein localises to the cytoplasm. The catalysed reaction is RNA(n) + a ribonucleoside 5'-triphosphate = RNA(n+1) + diphosphate. Functionally, DNA-dependent RNA polymerase (RNAP) catalyzes the transcription of DNA into RNA using the four ribonucleoside triphosphates as substrates. This is DNA-directed RNA polymerase subunit Rpo5 from Methanopyrus kandleri (strain AV19 / DSM 6324 / JCM 9639 / NBRC 100938).